Consider the following 70-residue polypeptide: ATP synthase subunit c (70 aa).

A run of 2 helical transmembrane segments spans residues 4–24 and 47–67; these read IAAG…NGLV and FLGV…AFLV.

This sequence belongs to the ATPase C chain family. In terms of assembly, F-type ATPases have 2 components, F(1) - the catalytic core - and F(0) - the membrane proton channel. F(1) has five subunits: alpha(3), beta(3), gamma(1), delta(1), epsilon(1). F(0) has three main subunits: a(1), b(2) and c(10-14). The alpha and beta chains form an alternating ring which encloses part of the gamma chain. F(1) is attached to F(0) by a central stalk formed by the gamma and epsilon chains, while a peripheral stalk is formed by the delta and b chains.

It is found in the cell membrane. Its function is as follows. F(1)F(0) ATP synthase produces ATP from ADP in the presence of a proton or sodium gradient. F-type ATPases consist of two structural domains, F(1) containing the extramembraneous catalytic core and F(0) containing the membrane proton channel, linked together by a central stalk and a peripheral stalk. During catalysis, ATP synthesis in the catalytic domain of F(1) is coupled via a rotary mechanism of the central stalk subunits to proton translocation. In terms of biological role, key component of the F(0) channel; it plays a direct role in translocation across the membrane. A homomeric c-ring of between 10-14 subunits forms the central stalk rotor element with the F(1) delta and epsilon subunits. This chain is ATP synthase subunit c, found in Limosilactobacillus fermentum (strain NBRC 3956 / LMG 18251) (Lactobacillus fermentum).